The primary structure comprises 877 residues: Leucine--tRNA ligase (877 aa).

Residues 43–53 carry the 'HIGH' region motif; the sequence is PYPSGRIHMGH. Positions 628-632 match the 'KMSKS' region motif; that stretch reads KMSKS. ATP is bound at residue Lys631.

The protein belongs to the class-I aminoacyl-tRNA synthetase family.

The protein resides in the cytoplasm. It carries out the reaction tRNA(Leu) + L-leucine + ATP = L-leucyl-tRNA(Leu) + AMP + diphosphate. The polypeptide is Leucine--tRNA ligase (Brucella abortus biovar 1 (strain 9-941)).